The chain runs to 97 residues: Large ribosomal subunit protein eL30 (97 aa).

This sequence belongs to the eukaryotic ribosomal protein eL30 family.

The sequence is that of Large ribosomal subunit protein eL30 from Methanoregula boonei (strain DSM 21154 / JCM 14090 / 6A8).